The sequence spans 1260 residues: Ankyrin repeat and sterile alpha motif domain-containing protein 1B (1260 aa).

7 ANK repeats span residues 2 to 31 (GKDQ…GGIL), 58 to 87 (SGYT…STNV), 91 to 120 (KGYF…SHSR), 127 to 156 (ENET…DPTI), 160 to 189 (KLET…NLMS), 193 to 222 (RKHT…DVSC), and 225 to 254 (EKGS…DANI). The segment at 298-326 (HAQEDTAQETRLSSPAQSPSQKTKSETVT) is disordered. The segment covering 306 to 326 (ETRLSSPAQSPSQKTKSETVT) has biased composition (polar residues). Serine 310, serine 311, serine 315, serine 354, and serine 365 each carry phosphoserine. Disordered regions lie at residues 368-402 (ELGK…SCGP), 491-513 (PGTG…PSPD), and 556-642 (GCTS…EASL). Positions 372 to 385 (NGSQSVRTSSTINL) are enriched in polar residues. The residue at position 504 (threonine 504) is a Phosphothreonine. 2 positions are modified to phosphoserine: serine 508 and serine 511. The segment covering 556-575 (GCTSFTSSPPVSPPTSSVET) has biased composition (low complexity). Over residues 576-588 (TEIKNEGAEHTDD) the composition is skewed to basic and acidic residues. Serine 739 carries the phosphoserine modification. The tract at residues 754 to 778 (VNWSKSSTAERSSKDNSERTPSFTS) is disordered. At threonine 773 the chain carries Phosphothreonine. Residue serine 775 is modified to Phosphoserine. 2 consecutive SAM domains span residues 810-876 (CPVQ…LPKM) and 884-949 (YHPT…RLHE). Residue tyrosine 901 is modified to Phosphotyrosine. A Nuclear localization signal motif is present at residues 935–938 (HRKR). Positions 946–989 (RLHEDPPQKPPRSITLREPSGNHTPPQLSPSLSQSTYTTGGSLD) are disordered. Residues 969–984 (TPPQLSPSLSQSTYTT) are compositionally biased toward low complexity. Serine 974 is subject to Phosphoserine. At tyrosine 1007 the chain carries Phosphotyrosine. The PID domain occupies 1056–1213 (IFQSCDYKAF…SFENKPSKPI (158 aa)). A disordered region spans residues 1197–1217 (HSSTLPESFENKPSKPIPKPR).

As to quaternary structure, interacts with EPHA8. Isoform 2 interacts with COIL. Isoform 3 interacts with DLG4. Post-translationally, nuclear translocation of isoform 3 requires an NMDAR-dependent proteolytic cleavage. A 35 kDa N-terminal form shuttles to the nucleus. Isoform 3 is brain specific and highly enriched in the postsynaptic densities (PSDs), especially in cortical, striatal and hippocampal PSDs.

It is found in the cytoplasm. Its subcellular location is the nucleus. The protein resides in the postsynaptic density. It localises to the cell projection. The protein localises to the dendritic spine. It is found in the cajal body. Its function is as follows. Isoform 2 may participate in the regulation of nucleoplasmic coilin protein interactions in neuronal and transformed cells. In terms of biological role, isoform 3 can regulate global protein synthesis by altering nucleolar numbers. This is Ankyrin repeat and sterile alpha motif domain-containing protein 1B (Anks1b) from Rattus norvegicus (Rat).